The chain runs to 243 residues: GrpE protein homolog, mitochondrial (243 aa).

Residues 56-79 form a disordered region; it reads KKEEPKDENDAAAAEEDANLTEEQ.

The protein belongs to the GrpE family. In terms of assembly, component of the PAM complex, at least composed of mtHsp70, MGE1, TIM44, PAM16, PAM17 and PAM18.

The protein localises to the mitochondrion matrix. Functionally, essential component of the PAM complex, a complex required for the translocation of transit peptide-containing proteins from the inner membrane into the mitochondrial matrix in an ATP-dependent manner. Seems to control the nucleotide-dependent binding of SSC1 to substrate proteins. The chain is GrpE protein homolog, mitochondrial (mge1) from Kluyveromyces lactis (strain ATCC 8585 / CBS 2359 / DSM 70799 / NBRC 1267 / NRRL Y-1140 / WM37) (Yeast).